The sequence spans 348 residues: Thioredoxin-related protein DsbJ (348 aa).

The signal sequence occupies residues 1–32; the sequence is MILLQNIKRCSLKQLKVLATLLLSLSLPTLEA.

Its subcellular location is the periplasm. This chain is Thioredoxin-related protein DsbJ (dsbJ), found in Chlamydia pneumoniae (Chlamydophila pneumoniae).